The chain runs to 387 residues: Galactokinase (387 aa).

33 to 36 contacts substrate; it reads EHTD. Residues Ser-67 and 124–130 each bind ATP; that span reads GSGLSSS. Mg(2+) contacts are provided by Ser-130 and Glu-162. Asp-174 functions as the Proton acceptor in the catalytic mechanism. Tyr-224 lines the substrate pocket.

The protein belongs to the GHMP kinase family. GalK subfamily.

Its subcellular location is the cytoplasm. The enzyme catalyses alpha-D-galactose + ATP = alpha-D-galactose 1-phosphate + ADP + H(+). The protein operates within carbohydrate metabolism; galactose metabolism. Its function is as follows. Catalyzes the transfer of the gamma-phosphate of ATP to D-galactose to form alpha-D-galactose-1-phosphate (Gal-1-P). The chain is Galactokinase from Ligilactobacillus salivarius (strain UCC118) (Lactobacillus salivarius).